Here is a 239-residue protein sequence, read N- to C-terminus: Ribonuclease PH (239 aa).

Phosphate is bound by residues R88 and 126–128 (GTR).

Belongs to the RNase PH family. As to quaternary structure, homohexameric ring arranged as a trimer of dimers.

The enzyme catalyses tRNA(n+1) + phosphate = tRNA(n) + a ribonucleoside 5'-diphosphate. In terms of biological role, phosphorolytic 3'-5' exoribonuclease that plays an important role in tRNA 3'-end maturation. Removes nucleotide residues following the 3'-CCA terminus of tRNAs; can also add nucleotides to the ends of RNA molecules by using nucleoside diphosphates as substrates, but this may not be physiologically important. Probably plays a role in initiation of 16S rRNA degradation (leading to ribosome degradation) during starvation. This Coxiella burnetii (strain Dugway 5J108-111) protein is Ribonuclease PH.